We begin with the raw amino-acid sequence, 758 residues long: Probable TonB-dependent receptor NMB0964 (758 aa).

The signal sequence occupies residues 1-24; sequence MAQTTLKPIVLSILLINTPLLAQA. A TBDR plug domain is found at 50–161; sequence LLHTSTASDK…VAGLVDVADG (112 aa). The TBDR beta-barrel domain occupies 171–758; that stretch reads GVSGELGLRL…SFTGGVNVKF (588 aa). The short motif at 741-758 is the TonB C-terminal box element; that stretch reads SDTPQMGRSFTGGVNVKF.

The protein belongs to the TonB-dependent receptor family.

Its subcellular location is the cell outer membrane. In terms of biological role, probable receptor, TonB-dependent. This Neisseria meningitidis serogroup B (strain ATCC BAA-335 / MC58) protein is Probable TonB-dependent receptor NMB0964.